Reading from the N-terminus, the 143-residue chain is Transcriptional regulator MraZ (143 aa).

SpoVT-AbrB domains follow at residues E5 to V47 and A76 to R119.

This sequence belongs to the MraZ family. Forms oligomers.

The protein localises to the cytoplasm. It localises to the nucleoid. This Roseiflexus castenholzii (strain DSM 13941 / HLO8) protein is Transcriptional regulator MraZ.